Consider the following 139-residue polypeptide: Large ribosomal subunit protein uL16 (139 aa).

This sequence belongs to the universal ribosomal protein uL16 family. As to quaternary structure, part of the 50S ribosomal subunit.

Its function is as follows. Binds 23S rRNA and is also seen to make contacts with the A and possibly P site tRNAs. This Gloeothece citriformis (strain PCC 7424) (Cyanothece sp. (strain PCC 7424)) protein is Large ribosomal subunit protein uL16.